The primary structure comprises 440 residues: Histidinol dehydrogenase (440 aa).

NAD(+)-binding residues include tyrosine 134, glutamine 196, and asparagine 219. Substrate contacts are provided by serine 242, glutamine 264, and histidine 267. 2 residues coordinate Zn(2+): glutamine 264 and histidine 267. Catalysis depends on proton acceptor residues glutamate 332 and histidine 333. Histidine 333, aspartate 366, glutamate 420, and histidine 425 together coordinate substrate. Residue aspartate 366 participates in Zn(2+) binding. Histidine 425 is a Zn(2+) binding site.

Belongs to the histidinol dehydrogenase family. Zn(2+) serves as cofactor.

It catalyses the reaction L-histidinol + 2 NAD(+) + H2O = L-histidine + 2 NADH + 3 H(+). The protein operates within amino-acid biosynthesis; L-histidine biosynthesis; L-histidine from 5-phospho-alpha-D-ribose 1-diphosphate: step 9/9. Its function is as follows. Catalyzes the sequential NAD-dependent oxidations of L-histidinol to L-histidinaldehyde and then to L-histidine. The chain is Histidinol dehydrogenase from Prochlorococcus marinus (strain SARG / CCMP1375 / SS120).